Reading from the N-terminus, the 130-residue chain is Protein 7.7 (130 aa).

This is Protein 7.7 from Escherichia phage T7 (Bacteriophage T7).